A 120-amino-acid chain; its full sequence is cAMP-responsive element-binding protein-like 2 (120 aa).

Residues 1 to 24 form a disordered region; that stretch reads MDDSKVVGGKVKKPGKRGRKPAKI. Residues 10–21 are compositionally biased toward basic residues; it reads KVKKPGKRGRKP. Positions 23–86 constitute a bZIP domain; sequence KIDLKAKLER…MAMDQGKIPS (64 aa). The tract at residues 29–60 is basic motif; that stretch reads KLERSRQSARECRARKKLRYQYLEELVSSRER. The segment at 62-69 is leucine-zipper; sequence ICALREEL. A disordered region spans residues 93-120; the sequence is TGEEQSKSQQNSSRHMKAGKTDANSNSW.

The protein belongs to the bZIP family. ATF subfamily. Interacts with CREB1; regulates CREB1 phosphorylation, stability and transcriptional activity. Interacts with immediate-early (IE) protein BICP22 of bovine herpesvirus-1 (BHV-1). In terms of processing, phosphorylated by AMPK.

It is found in the nucleus. Probable regulator of CREB1 transcriptional activity which is involved in adipose cells differentiation. May also play a regulatory role in the cell cycle. The polypeptide is cAMP-responsive element-binding protein-like 2 (CREBL2) (Bos taurus (Bovine)).